Consider the following 66-residue polypeptide: Large ribosomal subunit protein bL35 (66 aa).

Residues 24–43 show a composition bias toward basic residues; it reads HKKAGKRHNLSKKSKARKRR. A disordered region spans residues 24-44; it reads HKKAGKRHNLSKKSKARKRRL.

This sequence belongs to the bacterial ribosomal protein bL35 family.

The chain is Large ribosomal subunit protein bL35 from Dictyoglomus thermophilum (strain ATCC 35947 / DSM 3960 / H-6-12).